We begin with the raw amino-acid sequence, 33 residues long: MSDIN-like toxin proprotein 5 (33 aa).

The propeptide occupies 1-10 (MSDINATRLP). A cross-link (cyclopeptide (Ile-Pro)) is located at residues 11 to 18 (IFWFIYFP). The propeptide occupies 19-32 (CVGDNVDNTLTRGE).

This sequence belongs to the MSDIN fungal toxin family. In terms of processing, processed by the macrocyclase-peptidase enzyme POPB to yield a toxic cyclic octapeptide. POPB first removes 10 residues from the N-terminus. Conformational trapping of the remaining peptide forces the enzyme to release this intermediate rather than proceed to macrocyclization. The enzyme rebinds the remaining peptide in a different conformation and catalyzes macrocyclization of the N-terminal 8 residues.

In terms of biological role, probable toxin that belongs to the MSDIN-like toxin family responsible for a large number of food poisoning cases and deaths. The polypeptide is MSDIN-like toxin proprotein 5 (Amanita phalloides (Death cap)).